Here is a 184-residue protein sequence, read N- to C-terminus: Copper transporter 6 (184 aa).

Low complexity predominate over residues Met1–Ala25. Residues Met1–Pro27 form a disordered region. Helical transmembrane passes span Tyr64–Leu84 and Met124–Val144.

It belongs to the copper transporter (Ctr) (TC 1.A.56) family. SLC31A subfamily.

It localises to the membrane. Its function is as follows. Involved in the transport of copper. The protein is Copper transporter 6 (COPT6) of Oryza sativa subsp. japonica (Rice).